The chain runs to 410 residues: Arginine deiminase (410 aa).

The active-site Amidino-cysteine intermediate is Cys-400.

It belongs to the arginine deiminase family.

It is found in the cytoplasm. It carries out the reaction L-arginine + H2O = L-citrulline + NH4(+). It functions in the pathway amino-acid degradation; L-arginine degradation via ADI pathway; carbamoyl phosphate from L-arginine: step 1/2. This chain is Arginine deiminase, found in Streptococcus uberis (strain ATCC BAA-854 / 0140J).